Here is a 264-residue protein sequence, read N- to C-terminus: tRNA pseudouridine synthase A (264 aa).

The Nucleophile role is filled by aspartate 51. Tyrosine 109 is a substrate binding site.

Belongs to the tRNA pseudouridine synthase TruA family. As to quaternary structure, homodimer.

The enzyme catalyses uridine(38/39/40) in tRNA = pseudouridine(38/39/40) in tRNA. Functionally, formation of pseudouridine at positions 38, 39 and 40 in the anticodon stem and loop of transfer RNAs. In Aromatoleum aromaticum (strain DSM 19018 / LMG 30748 / EbN1) (Azoarcus sp. (strain EbN1)), this protein is tRNA pseudouridine synthase A.